A 252-amino-acid chain; its full sequence is 5'-nucleotidase SurE (252 aa).

Residues Asp-8, Asp-9, Ser-40, and Asn-93 each coordinate a divalent metal cation.

Belongs to the SurE nucleotidase family. A divalent metal cation is required as a cofactor.

The protein localises to the cytoplasm. It catalyses the reaction a ribonucleoside 5'-phosphate + H2O = a ribonucleoside + phosphate. Nucleotidase that shows phosphatase activity on nucleoside 5'-monophosphates. The protein is 5'-nucleotidase SurE of Methylocella silvestris (strain DSM 15510 / CIP 108128 / LMG 27833 / NCIMB 13906 / BL2).